The sequence spans 667 residues: UvrABC system protein B (667 aa).

Positions 25-180 (DSLQNQHRFQ…LLRALVSVQY (156 aa)) constitute a Helicase ATP-binding domain. 38–45 (GATGTGKT) serves as a coordination point for ATP. Positions 91–114 (YYDYYQPEAYIPVSDTYIEKSSSI) match the Beta-hairpin motif. The region spanning 429 to 595 (QVDDLLGEIK…PIVKRSSNSI (167 aa)) is the Helicase C-terminal domain. The 36-residue stretch at 626–661 (PELIQQLEAQMKEAAKNLEFESAAKYRDRIKQLRDK) folds into the UVR domain.

This sequence belongs to the UvrB family. In terms of assembly, forms a heterotetramer with UvrA during the search for lesions. Interacts with UvrC in an incision complex.

It is found in the cytoplasm. Its function is as follows. The UvrABC repair system catalyzes the recognition and processing of DNA lesions. A damage recognition complex composed of 2 UvrA and 2 UvrB subunits scans DNA for abnormalities. Upon binding of the UvrA(2)B(2) complex to a putative damaged site, the DNA wraps around one UvrB monomer. DNA wrap is dependent on ATP binding by UvrB and probably causes local melting of the DNA helix, facilitating insertion of UvrB beta-hairpin between the DNA strands. Then UvrB probes one DNA strand for the presence of a lesion. If a lesion is found the UvrA subunits dissociate and the UvrB-DNA preincision complex is formed. This complex is subsequently bound by UvrC and the second UvrB is released. If no lesion is found, the DNA wraps around the other UvrB subunit that will check the other stand for damage. In Microcystis aeruginosa (strain NIES-843 / IAM M-2473), this protein is UvrABC system protein B.